A 1120-amino-acid polypeptide reads, in one-letter code: DNA-directed RNA polymerase subunit beta (1120 aa).

Belongs to the RNA polymerase beta chain family. In plastids the minimal PEP RNA polymerase catalytic core is composed of four subunits: alpha, beta, beta', and beta''. When a (nuclear-encoded) sigma factor is associated with the core the holoenzyme is formed, which can initiate transcription.

It localises to the plastid. The protein resides in the chloroplast. It carries out the reaction RNA(n) + a ribonucleoside 5'-triphosphate = RNA(n+1) + diphosphate. DNA-dependent RNA polymerase catalyzes the transcription of DNA into RNA using the four ribonucleoside triphosphates as substrates. This Gracilaria tenuistipitata var. liui (Red alga) protein is DNA-directed RNA polymerase subunit beta.